Here is a 131-residue protein sequence, read N- to C-terminus: Large ribosomal subunit protein bL19 (131 aa).

The tract at residues Lys-112–Ala-131 is disordered.

This sequence belongs to the bacterial ribosomal protein bL19 family.

Functionally, this protein is located at the 30S-50S ribosomal subunit interface and may play a role in the structure and function of the aminoacyl-tRNA binding site. In Caulobacter vibrioides (strain ATCC 19089 / CIP 103742 / CB 15) (Caulobacter crescentus), this protein is Large ribosomal subunit protein bL19.